Reading from the N-terminus, the 478-residue chain is Secretogranin-3 (478 aa).

The signal sequence occupies residues 1 to 21; that stretch reads MASKRLGFVVVLALVCQHINA. 2 disordered regions span residues 22-126 and 208-287; these read FPTP…NGMD and IGDR…EDGL. Positions 28-42 are enriched in basic and acidic residues; it reads PDDKYNRELTEEKPL. A compositionally biased stretch (acidic residues) spans 63-74; it reads AEEETNSEDDDI. The segment covering 97–120 has biased composition (basic and acidic residues); it reads ANERLGADDTDSTKNRRLADDYDS. Over residues 235-259 the composition is skewed to acidic residues; it reads DEEDEVENEGGDDANGDEPQEEESR.

The protein localises to the cytoplasmic vesicle. It localises to the secretory vesicle lumen. It is found in the secretory vesicle membrane. The protein resides in the secreted. The chain is Secretogranin-3 (scg3) from Danio rerio (Zebrafish).